The primary structure comprises 108 residues: Cytochrome c (108 aa).

Heme c is bound by residues C19, C22, H23, and M85.

The protein belongs to the cytochrome c family. Binds 1 heme c group covalently per subunit.

The protein resides in the mitochondrion intermembrane space. Functionally, electron carrier protein. The oxidized form of the cytochrome c heme group can accept an electron from the heme group of the cytochrome c1 subunit of cytochrome reductase. Cytochrome c then transfers this electron to the cytochrome oxidase complex, the final protein carrier in the mitochondrial electron-transport chain. The chain is Cytochrome c from Cochliobolus lunatus (Filamentous fungus).